Consider the following 1100-residue polypeptide: MASSVEDQQLQQEEAESVKDVQSHYLRCPSPSFSMMSDRFSTVSDRFSVISGSEAESIFMEPIHLSSTIAAKKIISEELPPRPARVSSPPDSALEPAQQLMVEDLYSRVQELLDERSLYNTPCVLDIQRALLRDRLEAPLSPVDEVWPNVFIAEKSVAVNKGRLKRLGITHVLNAAHGTGVYTGPLFYSGMNIHYMGIEVDDFPDADISPHFRSCAEFLDDALLTHRGKVLVDSMMGVSRSAVLVAAYLMIFQNMSIMEALLEIRKKRAISPNEGFIKQLRQLNETLMEERDEDDDETLSQCSVIDARGRLEEQESVFGVKADSIMVEEEEDGGGSVISSVASSAAAAALRAGVQCGSQQPNMQQPADQPSLPGQTREDEDGDVDRMILEWQKRNEKYQSEDWWEAQLLCEDEDDGEDKTQRAVRPDDLESVTSEDVRMVKERIGRRPRRAASLAGSTSSCSSYVDLWKQRLQELEEQAAARHRLQDQDTSSETQQKKIDDDVQSILSDSSSMYNFCKKNKENLTPLERWKIKRIQFGWNKKENAENGEQSEAEPAAAPDLEDVNLTAYQTWKLKQQKKHGGEENKEEILQMSRGEDTATARRRQRREEVLERSRRNLQESQSVCGWETESALSSSIPLSAFCAGAFPSASVCGDDSMSVLSGRSSVLSGRSTRSLPPAVLETPAPPTPVLGPNGEQMVNIANIQNWIASVVNETLQQKQTEMLMGASVAPSRAGSVFSAGRGVDDDKSSVLSGLSASTGLSRSRAESVVSVGAKARSVLSAAGRAESVFSAGGASQLSCGSRKSKITTTSVPLYSLFQDQVNLHKLDTMEKEIKSDMRDKMASYEIKKITEDNKRSTLYKKKKPKEDDEDVDIAKSNGLEELEARTCEKPKPKRDYGRSGILNLPASANNPTSSIDEWLEHVRPPSSKPRVYDGDSGPIRMSRPAYEELQEPSGLDFTSRRSSVSVEVDEEEDYSFRFSSRNCADDDLDPELSYSSRRSPSFNGLSESTSFASRRSYSRYEDEERSSFQNHSIKQKSSVYEDSGRTAGSRRDEEEDEEISAFIAQIKQRARARVAEEMEDDEVLTAWRKQEESKSHDHK.

The segment covering 1–12 (MASSVEDQQLQQ) has biased composition (polar residues). Positions 1–21 (MASSVEDQQLQQEEAESVKDV) are disordered. The Tyrosine-protein phosphatase domain occupies 141-289 (SPVDEVWPNV…LRQLNETLME (149 aa)). The segment covering 356-374 (CGSQQPNMQQPADQPSLPG) has biased composition (polar residues). Disordered stretches follow at residues 356-383 (CGSQ…EDGD), 411-436 (EDED…TSED), 479-504 (AAAR…DDVQ), 542-561 (KENA…APDL), 575-615 (KQQK…ERSR), 667-686 (VLSG…TPAP), 888-1060 (CEKP…DEEI), and 1075-1100 (VAEE…HDHK). Residues 418-428 (DKTQRAVRPDD) are compositionally biased toward basic and acidic residues. Residues 580 to 615 (HGGEENKEEILQMSRGEDTATARRRQRREEVLERSR) show a composition bias toward basic and acidic residues. Residues 667-676 (VLSGRSTRSL) show a composition bias toward low complexity. The span at 888 to 898 (CEKPKPKRDYG) shows a compositional bias: basic and acidic residues. Composition is skewed to polar residues over residues 907-916 (ASANNPTSSI), 994-1013 (SYSS…TSFA), and 1029-1041 (FQNH…SSVY). A compositionally biased stretch (basic and acidic residues) spans 1089–1100 (RKQEESKSHDHK).

This sequence belongs to the protein-tyrosine phosphatase family. Non-receptor class dual specificity subfamily. In terms of tissue distribution, expressed in muscle fibers in a regular striated pattern (at protein level).

The protein resides in the cytoplasm. It localises to the myofibril. The protein localises to the sarcomere. Its function is as follows. Required for myofiber maturation. The protein is Serine/threonine/tyrosine-interacting-like protein 2 (styxl2) of Danio rerio (Zebrafish).